We begin with the raw amino-acid sequence, 141 residues long: Hemoglobin subunit alpha (141 aa).

The Globin domain maps to 1 to 141; it reads VLSPADKSNV…VSTVLTSKYR (141 aa). A Phosphoserine modification is found at S3. N6-succinyllysine is present on residues K7 and K11. N6-acetyllysine; alternate is present on K16. K16 is modified (N6-succinyllysine; alternate). The residue at position 24 (Y24) is a Phosphotyrosine. S35 is modified (phosphoserine). K40 carries the N6-succinyllysine modification. Position 49 is a phosphoserine (S49). Residue H58 participates in O2 binding. H87 contacts heme b. S102 is modified (phosphoserine). T108 is modified (phosphothreonine). Residues S124 and S131 each carry the phosphoserine modification. 2 positions are modified to phosphothreonine: T134 and T137. S138 bears the Phosphoserine mark.

Belongs to the globin family. In terms of assembly, heterotetramer of two alpha chains and two beta chains. As to expression, red blood cells.

Functionally, involved in oxygen transport from the lung to the various peripheral tissues. In terms of biological role, hemopressin acts as an antagonist peptide of the cannabinoid receptor CNR1. Hemopressin-binding efficiently blocks cannabinoid receptor CNR1 and subsequent signaling. The protein is Hemoglobin subunit alpha (HBA) of Saguinus oedipus (Cotton-top tamarin).